A 65-amino-acid chain; its full sequence is Lantibiotic lacticin 3147 A2 (65 aa).

Positions 1-36 are excised as a propeptide; sequence MKEKNMKKNDTIELQLGKYLEDDMIELAEGDESHGG. Residue T37 is modified to 2-oxobutanoic acid. A 2,3-didehydrobutyrine mark is found at T38 and T41. Residues S45 and S48 each carry the 2,3-didehydroalanine (Ser) modification. Positions 52-56 form a cross-link, lanthionine (Ser-Cys); sequence STNTC. Cross-links (beta-methyllanthionine (Thr-Cys)) lie at residues 58 to 61 and 62 to 65; these read TTKC and TRAC.

Post-translationally, maturation of lantibiotics involves the enzymatic conversion of Thr, and Ser into dehydrated AA and the formation of thioether bonds with cysteine. This is followed by membrane translocation and cleavage of the modified precursor. In terms of processing, it is not established whether the 2,3-didehydrobutyrines are the E- or Z-isomers. In the NMR model they were assumed to be the Z-isomer.

It localises to the secreted. Its function is as follows. Lanthionine-containing peptide antibiotic (lantibiotic) active on Gram-positive bacteria. The bactericidal activity of lantibiotics is based on depolarization of energized bacterial cytoplasmic membranes, initiated by the formation of aqueous transmembrane pores. When present individually lacticin 3147 A2 exhibits weak activity towards L.lactis strain AM2 and L.lactis strain HP, and no activity towards L.lactis strain IFPL359, but when combined with lacticin 3147 A1 it displays strong activity towards all three strains. The sequence is that of Lantibiotic lacticin 3147 A2 from Lactococcus lactis subsp. lactis (Streptococcus lactis).